A 304-amino-acid chain; its full sequence is Ribonuclease Z (304 aa).

Positions 63, 65, 67, 68, 143, 213, and 271 each coordinate Zn(2+). Aspartate 67 serves as the catalytic Proton acceptor.

This sequence belongs to the RNase Z family. As to quaternary structure, homodimer. Zn(2+) serves as cofactor.

It catalyses the reaction Endonucleolytic cleavage of RNA, removing extra 3' nucleotides from tRNA precursor, generating 3' termini of tRNAs. A 3'-hydroxy group is left at the tRNA terminus and a 5'-phosphoryl group is left at the trailer molecule.. Functionally, zinc phosphodiesterase, which displays some tRNA 3'-processing endonuclease activity. Probably involved in tRNA maturation, by removing a 3'-trailer from precursor tRNA. The protein is Ribonuclease Z of Porphyromonas gingivalis (strain ATCC BAA-308 / W83).